Reading from the N-terminus, the 528-residue chain is UDP-glucuronosyltransferase 2A2 (528 aa).

The first 21 residues, 1–21 (MIKKVLQLLIFHLTLAEIVLS), serve as a signal peptide directing secretion. Residues 22-494 (GNVVVWPTDG…FQYHSLDVIG (473 aa)) are Extracellular-facing. N-linked (GlcNAc...) asparagine glycosylation is found at Asn48 and Asn314. A helical membrane pass occupies residues 495-515 (FLLACVASAILLVAKCCLFIF). The Cytoplasmic portion of the chain corresponds to 516–528 (QKVGKTGKKKKRD).

Belongs to the UDP-glycosyltransferase family.

It is found in the membrane. It catalyses the reaction glucuronate acceptor + UDP-alpha-D-glucuronate = acceptor beta-D-glucuronoside + UDP + H(+). The enzyme catalyses 17alpha-estradiol + UDP-alpha-D-glucuronate = 17alpha-estradiol 3-O-(beta-D-glucuronate) + UDP + H(+). The catalysed reaction is 17beta-estradiol + UDP-alpha-D-glucuronate = 17beta-estradiol 3-O-(beta-D-glucuronate) + UDP + H(+). It carries out the reaction chenodeoxycholate + UDP-alpha-D-glucuronate = chenodeoxycholoyl-24-O-(beta-D-glucuronate) + UDP. It catalyses the reaction lithocholate + UDP-alpha-D-glucuronate = lithocholoyl-24-O-(beta-D-glucuronate) + UDP. The enzyme catalyses deoxycholate + UDP-alpha-D-glucuronate = deoxycholoyl-24-O-(beta-D-glucuronate) + UDP. The catalysed reaction is hyocholate + UDP-alpha-D-glucuronate = hyocholoyl-24-O-(beta-D-glucuronate) + UDP. It carries out the reaction hyodeoxycholate + UDP-alpha-D-glucuronate = hyodeoxycholate 6-O-(beta-D-glucuronate) + UDP + H(+). UDP-glucuronosyltransferase (UGT) that catalyzes phase II biotransformation reactions in which lipophilic substrates are conjugated with glucuronic acid to increase the metabolite's water solubility, thereby facilitating excretion into either the urine or bile. Essential for the elimination and detoxification of drugs, xenobiotics and endogenous compounds. Catalyzes the glucuronidation of endogenous estrogen hormone estradiol. Contributes to bile acid (BA) detoxification by catalyzing the glucuronidation of BA substrates, which are natural detergents for dietary lipids absorption. Potential role in detoxification of toxic waste compounds in the amniotic fluid before birth, and air-born chemical after birth. The chain is UDP-glucuronosyltransferase 2A2 from Mus musculus (Mouse).